Reading from the N-terminus, the 266-residue chain is Hydroxyethylthiazole kinase (266 aa).

M45 contributes to the substrate binding site. ATP contacts are provided by K121 and S167. G194 lines the substrate pocket.

It belongs to the Thz kinase family. The cofactor is Mg(2+).

It carries out the reaction 5-(2-hydroxyethyl)-4-methylthiazole + ATP = 4-methyl-5-(2-phosphooxyethyl)-thiazole + ADP + H(+). The protein operates within cofactor biosynthesis; thiamine diphosphate biosynthesis; 4-methyl-5-(2-phosphoethyl)-thiazole from 5-(2-hydroxyethyl)-4-methylthiazole: step 1/1. In terms of biological role, catalyzes the phosphorylation of the hydroxyl group of 4-methyl-5-beta-hydroxyethylthiazole (THZ). The protein is Hydroxyethylthiazole kinase of Methanocella arvoryzae (strain DSM 22066 / NBRC 105507 / MRE50).